The sequence spans 244 residues: 1-(5-phosphoribosyl)-5-[(5-phosphoribosylamino)methylideneamino] imidazole-4-carboxamide isomerase (244 aa).

The active-site Proton acceptor is the Asp-9. Catalysis depends on Asp-131, which acts as the Proton donor.

It belongs to the HisA/HisF family.

Its subcellular location is the cytoplasm. It catalyses the reaction 1-(5-phospho-beta-D-ribosyl)-5-[(5-phospho-beta-D-ribosylamino)methylideneamino]imidazole-4-carboxamide = 5-[(5-phospho-1-deoxy-D-ribulos-1-ylimino)methylamino]-1-(5-phospho-beta-D-ribosyl)imidazole-4-carboxamide. The protein operates within amino-acid biosynthesis; L-histidine biosynthesis; L-histidine from 5-phospho-alpha-D-ribose 1-diphosphate: step 4/9. This is 1-(5-phosphoribosyl)-5-[(5-phosphoribosylamino)methylideneamino] imidazole-4-carboxamide isomerase from Campylobacter jejuni subsp. doylei (strain ATCC BAA-1458 / RM4099 / 269.97).